The following is a 228-amino-acid chain: Ribulose-phosphate 3-epimerase (228 aa).

Serine 11 serves as a coordination point for substrate. A divalent metal cation is bound by residues histidine 36, aspartate 38, and histidine 69. The Proton acceptor role is filled by aspartate 38. Residues histidine 69, 145-148, 180-182, and 202-203 each bind substrate; these read GFCG, DGG, and AS. Aspartate 180 is an a divalent metal cation binding site. The active-site Proton donor is aspartate 180.

The protein belongs to the ribulose-phosphate 3-epimerase family. Requires a divalent metal cation as cofactor.

The enzyme catalyses D-ribulose 5-phosphate = D-xylulose 5-phosphate. Its pathway is carbohydrate degradation. In terms of biological role, catalyzes the reversible epimerization of D-ribulose 5-phosphate to D-xylulose 5-phosphate. The chain is Ribulose-phosphate 3-epimerase from Chlamydia muridarum (strain MoPn / Nigg).